The chain runs to 206 residues: MARYIGPKCKLARREGTDLFLKSGVRAIESKCNIEAAPGIHGQRRGRQSDYGTQLREKQKVRRIYGVLERQFSGYYKAAASKKGATGENLLQLLECRLDNVVYRMGFGSTRAESRQLVSHKSISVNGQTVNVPSYQVRAGDVVAVREKAKNQLRIVQALELCAQRGRVEWVEVDAEKKSGVFKNVPARSDLSADINESLIVELYSK.

The S4 RNA-binding domain maps to 96-156 (CRLDNVVYRM…EKAKNQLRIV (61 aa)).

It belongs to the universal ribosomal protein uS4 family. In terms of assembly, part of the 30S ribosomal subunit. Contacts protein S5. The interaction surface between S4 and S5 is involved in control of translational fidelity.

One of the primary rRNA binding proteins, it binds directly to 16S rRNA where it nucleates assembly of the body of the 30S subunit. In terms of biological role, with S5 and S12 plays an important role in translational accuracy. In Pseudomonas fluorescens (strain Pf0-1), this protein is Small ribosomal subunit protein uS4.